Here is a 212-residue protein sequence, read N- to C-terminus: Large ribosomal subunit protein uL3 (212 aa).

N5-methylglutamine is present on Gln-153.

The protein belongs to the universal ribosomal protein uL3 family. As to quaternary structure, part of the 50S ribosomal subunit. Forms a cluster with proteins L14 and L19. Methylated by PrmB.

Functionally, one of the primary rRNA binding proteins, it binds directly near the 3'-end of the 23S rRNA, where it nucleates assembly of the 50S subunit. In Shewanella denitrificans (strain OS217 / ATCC BAA-1090 / DSM 15013), this protein is Large ribosomal subunit protein uL3.